Here is a 222-residue protein sequence, read N- to C-terminus: Probable translocation protein y4yL (222 aa).

The next 4 helical transmembrane spans lie at 6–26 (PAILALLAITAALGLLVLAVV), 52–72 (PNIVLYAAALILTMFVSAPVA), 158–178 (IGFLLYLPFIVIDLIVTTILM), and 182–202 (MSMVSPTIIAVPFKLFLFVAI).

It belongs to the FliP/MopC/SpaP family.

It is found in the cell membrane. Functionally, could be involved in the secretion of an unknown factor. In Sinorhizobium fredii (strain NBRC 101917 / NGR234), this protein is Probable translocation protein y4yL.